We begin with the raw amino-acid sequence, 138 residues long: Flavodoxin (138 aa).

The 136-residue stretch at 1-136 folds into the Flavodoxin-like domain; that stretch reads MKIVYWSGTG…DCIEFGKKIA (136 aa).

This sequence belongs to the flavodoxin family. Requires FMN as cofactor.

Its function is as follows. Low-potential electron donor to a number of redox enzymes. The chain is Flavodoxin from Clostridium beijerinckii (Clostridium MP).